The chain runs to 309 residues: Replication factor C subunit 4 (309 aa).

Residues V5, V17, 42–50, N134, and R192 each bind ATP; that span reads GPPGTGKTT.

It belongs to the activator 1 small subunits family. As to quaternary structure, component of the replication factor C (RFC) complex.

The protein localises to the nucleus. Component of ATP-dependent clamp loader (RFC and RFC-like) complexes for DNA clamps. During a clamp loading circle, the RFC:clamp complex binds to DNA and the recognition of the double-stranded/single-stranded junction stimulates ATP hydrolysis by RFC. The complex presumably provides bipartite ATP sites in which one subunit supplies a catalytic site for hydrolysis of ATP bound to the neighboring subunit. Dissociation of RFC from the clamp leaves the clamp encircling DNA. Component of the replication factor C (RFC or activator 1) complex which acts during elongation of primed DNA templates by DNA polymerase delta and epsilon. RFC has an essential but redundant activity in sister chromatid cohesion establishment. The polypeptide is Replication factor C subunit 4 (RFC4) (Encephalitozoon cuniculi (strain GB-M1) (Microsporidian parasite)).